We begin with the raw amino-acid sequence, 267 residues long: 3-methyl-2-oxobutanoate hydroxymethyltransferase (267 aa).

Mg(2+)-binding residues include D45 and D84. Residues 45–46, D84, and K113 contribute to the 3-methyl-2-oxobutanoate site; that span reads DS. E115 lines the Mg(2+) pocket. E182 functions as the Proton acceptor in the catalytic mechanism.

It belongs to the PanB family. In terms of assembly, homodecamer; pentamer of dimers. Mg(2+) serves as cofactor.

The protein localises to the cytoplasm. The enzyme catalyses 3-methyl-2-oxobutanoate + (6R)-5,10-methylene-5,6,7,8-tetrahydrofolate + H2O = 2-dehydropantoate + (6S)-5,6,7,8-tetrahydrofolate. It functions in the pathway cofactor biosynthesis; coenzyme A biosynthesis. Catalyzes the reversible reaction in which hydroxymethyl group from 5,10-methylenetetrahydrofolate is transferred onto alpha-ketoisovalerate to form ketopantoate. The polypeptide is 3-methyl-2-oxobutanoate hydroxymethyltransferase (Saccharolobus solfataricus (strain ATCC 35092 / DSM 1617 / JCM 11322 / P2) (Sulfolobus solfataricus)).